Reading from the N-terminus, the 641-residue chain is NADH-ubiquinone oxidoreductase chain 5 (641 aa).

17 helical membrane-spanning segments follow: residues 1-21 (MYLT…VIGR), 33-53 (SLSI…IVLL), 59-79 (ITIY…WAFY), 83-103 (ISIT…LYSI), 121-141 (LFTF…MFVG), 175-195 (VGDL…GSSD), 211-231 (ITIV…QLGL), 243-263 (TPVS…YLIL), 276-296 (LICV…TGLF), 303-322 (VIAY…LGLS), 367-387 (ILPF…ALPF), 405-425 (FLVT…ITAF), 453-473 (PLIM…IGYI), 476-496 (KHLS…VGTL), 512-532 (FGVQ…ALIV), 564-584 (WFDN…GGIF), and 621-641 (IPHY…SIFI).

Belongs to the complex I subunit 5 family.

Its subcellular location is the mitochondrion inner membrane. It catalyses the reaction a ubiquinone + NADH + 5 H(+)(in) = a ubiquinol + NAD(+) + 4 H(+)(out). Functionally, core subunit of the mitochondrial membrane respiratory chain NADH dehydrogenase (Complex I) that is believed to belong to the minimal assembly required for catalysis. Complex I functions in the transfer of electrons from NADH to the respiratory chain. The immediate electron acceptor for the enzyme is believed to be ubiquinone. The polypeptide is NADH-ubiquinone oxidoreductase chain 5 (ND5) (Allomyces macrogynus).